The primary structure comprises 311 residues: Ribosomal RNA small subunit methyltransferase H (311 aa).

Residues 32–34 (AGH), aspartate 52, phenylalanine 79, aspartate 100, and glutamine 107 contribute to the S-adenosyl-L-methionine site.

The protein belongs to the methyltransferase superfamily. RsmH family.

Its subcellular location is the cytoplasm. It carries out the reaction cytidine(1402) in 16S rRNA + S-adenosyl-L-methionine = N(4)-methylcytidine(1402) in 16S rRNA + S-adenosyl-L-homocysteine + H(+). In terms of biological role, specifically methylates the N4 position of cytidine in position 1402 (C1402) of 16S rRNA. This is Ribosomal RNA small subunit methyltransferase H from Staphylococcus aureus (strain bovine RF122 / ET3-1).